A 216-amino-acid polypeptide reads, in one-letter code: Pyridoxine/pyridoxamine 5'-phosphate oxidase (216 aa).

Residues 9–12 (RLSY) and Arg67 each bind substrate. FMN-binding positions include 62–67 (RIVLLR), 77–78 (YT), Lys84, and Gln106. 3 residues coordinate substrate: Tyr124, Arg128, and Ser132. FMN-binding positions include 142–143 (QS) and Trp188. 194–196 (RMH) serves as a coordination point for substrate. Residue Arg198 participates in FMN binding.

This sequence belongs to the pyridoxamine 5'-phosphate oxidase family. Homodimer. It depends on FMN as a cofactor.

The catalysed reaction is pyridoxamine 5'-phosphate + O2 + H2O = pyridoxal 5'-phosphate + H2O2 + NH4(+). It catalyses the reaction pyridoxine 5'-phosphate + O2 = pyridoxal 5'-phosphate + H2O2. It participates in cofactor metabolism; pyridoxal 5'-phosphate salvage; pyridoxal 5'-phosphate from pyridoxamine 5'-phosphate: step 1/1. It functions in the pathway cofactor metabolism; pyridoxal 5'-phosphate salvage; pyridoxal 5'-phosphate from pyridoxine 5'-phosphate: step 1/1. Catalyzes the oxidation of either pyridoxine 5'-phosphate (PNP) or pyridoxamine 5'-phosphate (PMP) into pyridoxal 5'-phosphate (PLP). The sequence is that of Pyridoxine/pyridoxamine 5'-phosphate oxidase from Psychrobacter cryohalolentis (strain ATCC BAA-1226 / DSM 17306 / VKM B-2378 / K5).